Here is a 260-residue protein sequence, read N- to C-terminus: Activator of 90 kDa heat shock protein ATPase homolog 2 (260 aa).

It belongs to the AHA1 family.

Its function is as follows. Co-chaperone that stimulates HSP90 ATPase activity. The sequence is that of Activator of 90 kDa heat shock protein ATPase homolog 2 (AHSA2) from Bos taurus (Bovine).